We begin with the raw amino-acid sequence, 388 residues long: MHKKIYLSPPHMSGREQHYISEAFRSNWIAPLGPLVNSFEEQLAERVGVKAAAAVGSGTAAIHLALRLLEVKEGDSVFCQSFTFVATANPILYEKAVPVFIDSEPDTWNMSPTALERALEEAKRNGTLPKAVIAVNLYGQSAKMDEIVSLCDAYGVPVIEDAAESLGTVYKGKQSGTFGRFGIFSFNGNKIITTSGGGMLVSNDEAAIEKARFLASQAREPAVHYQHSEIGHNYRLSNILAGVGIAQLEVLDERVEKRRTIFTRYKNALGHLDGVRFMPEYAAGVSNRWLTTLTLDNGLSPYDIVQRLAEENIEARPLWKPLHTQPLFDPALFYSHEDTGSVCEDLFKRGICLPSGSNMTEDEQGRVIEVLLHLFHTVEVKKWTASIR.

At Lys190 the chain carries N6-(pyridoxal phosphate)lysine.

It belongs to the DegT/DnrJ/EryC1 family. Pyridoxal 5'-phosphate serves as cofactor.

May be involved in the production of the exopolysaccharide (EPS) component of the extracellular matrix during biofilm formation. EPS is responsible for the adhesion of chains of cells into bundles. This Bacillus subtilis (strain 168) protein is Putative pyridoxal phosphate-dependent aminotransferase EpsN (epsN).